We begin with the raw amino-acid sequence, 205 residues long: Phosphoenolpyruvate guanylyltransferase (205 aa).

Phosphoenolpyruvate contacts are provided by Thr137, Gly153, and Ser156.

The protein belongs to the CofC family.

It catalyses the reaction phosphoenolpyruvate + GTP + H(+) = enolpyruvoyl-2-diphospho-5'-guanosine + diphosphate. Its pathway is cofactor biosynthesis; coenzyme F420 biosynthesis. Guanylyltransferase that catalyzes the activation of phosphoenolpyruvate (PEP) as enolpyruvoyl-2-diphospho-5'-guanosine, via the condensation of PEP with GTP. It is involved in the biosynthesis of coenzyme F420, a hydride carrier cofactor. This is Phosphoenolpyruvate guanylyltransferase from Rubrobacter xylanophilus (strain DSM 9941 / JCM 11954 / NBRC 16129 / PRD-1).